Consider the following 311-residue polypeptide: Serine/threonine-protein phosphatase 4 catalytic subunit A (311 aa).

Residues D58, H60, D86, and N118 each coordinate Mn(2+). The active-site Proton donor is the H119. H168 and H242 together coordinate Mn(2+). Position 311 is a leucine methyl ester (L311).

Belongs to the PPP phosphatase family. PP-4 (PP-X) subfamily. In terms of assembly, serine/threonine-protein phosphatase 4 (PP4) occurs in different assemblies of the catalytic and one or more regulatory subunits. Mn(2+) serves as cofactor.

The protein resides in the cytoplasm. It localises to the cytoskeleton. It is found in the microtubule organizing center. The protein localises to the centrosome. It carries out the reaction O-phospho-L-seryl-[protein] + H2O = L-seryl-[protein] + phosphate. It catalyses the reaction O-phospho-L-threonyl-[protein] + H2O = L-threonyl-[protein] + phosphate. Its function is as follows. Protein phosphatase that regulates many processes such as microtubule organization at centrosomes. The polypeptide is Serine/threonine-protein phosphatase 4 catalytic subunit A (ppp4ca) (Danio rerio (Zebrafish)).